The sequence spans 327 residues: Lipoyl synthase (327 aa).

7 residues coordinate [4Fe-4S] cluster: C72, C77, C83, C98, C102, C105, and S313. Residues 83-302 form the Radical SAM core domain; it reads CWSHGTATIM…RRVGLEKGFL (220 aa).

The protein belongs to the radical SAM superfamily. Lipoyl synthase family. [4Fe-4S] cluster is required as a cofactor.

It localises to the cytoplasm. It carries out the reaction [[Fe-S] cluster scaffold protein carrying a second [4Fe-4S](2+) cluster] + N(6)-octanoyl-L-lysyl-[protein] + 2 oxidized [2Fe-2S]-[ferredoxin] + 2 S-adenosyl-L-methionine + 4 H(+) = [[Fe-S] cluster scaffold protein] + N(6)-[(R)-dihydrolipoyl]-L-lysyl-[protein] + 4 Fe(3+) + 2 hydrogen sulfide + 2 5'-deoxyadenosine + 2 L-methionine + 2 reduced [2Fe-2S]-[ferredoxin]. It participates in protein modification; protein lipoylation via endogenous pathway; protein N(6)-(lipoyl)lysine from octanoyl-[acyl-carrier-protein]: step 2/2. Its function is as follows. Catalyzes the radical-mediated insertion of two sulfur atoms into the C-6 and C-8 positions of the octanoyl moiety bound to the lipoyl domains of lipoate-dependent enzymes, thereby converting the octanoylated domains into lipoylated derivatives. The polypeptide is Lipoyl synthase (Francisella philomiragia subsp. philomiragia (strain ATCC 25017 / CCUG 19701 / FSC 153 / O#319-036)).